Here is an 85-residue protein sequence, read N- to C-terminus: MKKGIHPENYRPVVFKDMSNEDIFITRSTMEAKETIEIDGVTYPLIKVEISNTSHPFFTGKAKLVDTAGRVDKFMSRYGDRNKKK.

Belongs to the bacterial ribosomal protein bL31 family. Type B subfamily. In terms of assembly, part of the 50S ribosomal subunit.

The polypeptide is Large ribosomal subunit protein bL31B (Porphyromonas gingivalis (strain ATCC 33277 / DSM 20709 / CIP 103683 / JCM 12257 / NCTC 11834 / 2561)).